Reading from the N-terminus, the 411-residue chain is Putative nickel insertion protein (411 aa).

This sequence belongs to the LarC family.

The polypeptide is Putative nickel insertion protein (Acaryochloris marina (strain MBIC 11017)).